Reading from the N-terminus, the 584-residue chain is Kinesin-like protein KIN-10C (584 aa).

The 314-residue stretch at 11 to 324 (PVRVVLRVRP…VSLAARSRHV (314 aa)) folds into the Kinesin motor domain. 99-106 (GATGSGKT) is an ATP binding site. 2 disordered regions span residues 377-398 (SMSHKKQSASGRVSGRGKAMDQ) and 445-469 (DKTGSSLRKALSPISSNMDPQKQRT).

Belongs to the TRAFAC class myosin-kinesin ATPase superfamily. Kinesin family. KIN-10 subfamily.

This chain is Kinesin-like protein KIN-10C, found in Oryza sativa subsp. japonica (Rice).